The sequence spans 468 residues: Heat stress transcription factor A-1e (468 aa).

A DNA-binding region spans residues 21–115 (IPPFLSKTYD…ILKSIVRRKP (95 aa)). Positions 133-199 (ACVEVGKFGL…QMMSFLAKAV (67 aa)) are hydrophobic repeat HR-A/B. Polar residues predominate over residues 211 to 220 (QSNEANQHIS). 2 disordered regions span residues 211 to 244 (QSNE…VNGL) and 268 to 309 (QMSN…PEVT). Positions 223–227 (NKKRR) match the Nuclear localization signal motif. The span at 277–305 (SLSSNNGSFLLGDVPNSNISDNGSSSNGS) shows a compositional bias: low complexity. The AHA signature appears at 402-411 (DSFWEQFIGE). Residues 454 to 461 (LTEQMGLL) carry the Nuclear export signal motif.

This sequence belongs to the HSF family. Class A subfamily. As to quaternary structure, homotrimer. Exhibits temperature-dependent phosphorylation.

Its subcellular location is the cytoplasm. It localises to the nucleus. Functionally, transcriptional activator that specifically binds DNA sequence 5'-AGAAnnTTCT-3' known as heat shock promoter elements (HSE). The protein is Heat stress transcription factor A-1e (HSFA1E) of Arabidopsis thaliana (Mouse-ear cress).